The chain runs to 412 residues: Peptidase T (412 aa).

A Zn(2+)-binding site is contributed by His-81. Residue Asp-83 is part of the active site. Asp-144 is a binding site for Zn(2+). Glu-178 (proton acceptor) is an active-site residue. Positions 179, 201, and 383 each coordinate Zn(2+).

It belongs to the peptidase M20B family. The cofactor is Zn(2+).

It localises to the cytoplasm. The enzyme catalyses Release of the N-terminal residue from a tripeptide.. Cleaves the N-terminal amino acid of tripeptides. The chain is Peptidase T from Bacillus cereus (strain ATCC 14579 / DSM 31 / CCUG 7414 / JCM 2152 / NBRC 15305 / NCIMB 9373 / NCTC 2599 / NRRL B-3711).